Consider the following 320-residue polypeptide: Acetyl-coenzyme A carboxylase carboxyl transferase subunit beta (320 aa).

Residues 25 to 294 form the CoA carboxyltransferase N-terminal domain; that stretch reads VWTKCDSCGQ…AKDEDELLGE (270 aa). Residues Cys29, Cys32, Cys48, and Cys51 each contribute to the Zn(2+) site. A C4-type zinc finger spans residues 29–51; sequence CDSCGQVLYRAELERNLEVCPKC. Acidic residues predominate over residues 295–310; it reads EMIADDIESSDNEPEI. The interval 295 to 320 is disordered; sequence EMIADDIESSDNEPEINIETNKKEDV.

This sequence belongs to the AccD/PCCB family. Acetyl-CoA carboxylase is a heterohexamer composed of biotin carboxyl carrier protein (AccB), biotin carboxylase (AccC) and two subunits each of ACCase subunit alpha (AccA) and ACCase subunit beta (AccD). Requires Zn(2+) as cofactor.

The protein localises to the cytoplasm. The catalysed reaction is N(6)-carboxybiotinyl-L-lysyl-[protein] + acetyl-CoA = N(6)-biotinyl-L-lysyl-[protein] + malonyl-CoA. The protein operates within lipid metabolism; malonyl-CoA biosynthesis; malonyl-CoA from acetyl-CoA: step 1/1. Its function is as follows. Component of the acetyl coenzyme A carboxylase (ACC) complex. Biotin carboxylase (BC) catalyzes the carboxylation of biotin on its carrier protein (BCCP) and then the CO(2) group is transferred by the transcarboxylase to acetyl-CoA to form malonyl-CoA. The sequence is that of Acetyl-coenzyme A carboxylase carboxyl transferase subunit beta from Proteus mirabilis (strain HI4320).